Reading from the N-terminus, the 221-residue chain is Retinitis pigmentosa 9 protein (221 aa).

3 stretches are compositionally biased toward basic and acidic residues: residues 1–10, 17–29, and 60–69; these read MSSRPGREDV, RPREPPEQELQRR, and IKEDETKPED. Residues 1 to 76 are disordered; that stretch reads MSSRPGREDV…PEDCIPDVPG (76 aa). The interval 1–155 is PIM1-binding; it reads MSSRPGREDV…RDNKRHEKDV (155 aa). A CCHC-type zinc finger spans residues 104–122; that stretch reads QCWRCKRYGHRTGDKECPF. K129 participates in a covalent cross-link: Glycyl lysine isopeptide (Lys-Gly) (interchain with G-Cter in SUMO2). The segment covering 147 to 156 has biased composition (basic and acidic residues); sequence DNKRHEKDVR. A disordered region spans residues 147–221; sequence DNKRHEKDVR…SKSNEGSDSE (75 aa). Basic residues predominate over residues 184–212; it reads KHKKKKKKEKHKKRKKEKKKKKKRKHKSS. Residues S212 and S214 each carry the phosphoserine; by PIM1 modification.

As to quaternary structure, binds to PIM1. Binds to ZNHIT4. In terms of tissue distribution, appears to be expressed in a wide range of tissues.

Its subcellular location is the nucleus. Its function is as follows. Is thought to be a target protein for the PIM1 kinase. May play some roles in B-cell proliferation in association with PIM1. This is Retinitis pigmentosa 9 protein (RP9) from Homo sapiens (Human).